Here is a 158-residue protein sequence, read N- to C-terminus: Ribosomal RNA large subunit methyltransferase H (158 aa).

S-adenosyl-L-methionine-binding positions include L76, G107, and 126–131 (LSGLTM).

It belongs to the RNA methyltransferase RlmH family. In terms of assembly, homodimer.

It is found in the cytoplasm. The catalysed reaction is pseudouridine(1915) in 23S rRNA + S-adenosyl-L-methionine = N(3)-methylpseudouridine(1915) in 23S rRNA + S-adenosyl-L-homocysteine + H(+). Functionally, specifically methylates the pseudouridine at position 1915 (m3Psi1915) in 23S rRNA. This chain is Ribosomal RNA large subunit methyltransferase H, found in Teredinibacter turnerae (strain ATCC 39867 / T7901).